A 369-amino-acid chain; its full sequence is MTTRPFVQVFDAQNKVVGKVKLPNVLTTPIRPDLVNFVHTNLNKNARQAYGAAPYAGEQTSAESWGTGRAVARIPRVPGSGTHRSGQGAFGNMCRGGRMYGPNKTWRRWNRKVNVNQKRYAVVSALAASAVPALVMARGHRINGINEVPLVIANESVDTLQKTKAAVELLKKINAYADVTKVIDSKHIRAGAGKARNRRYKVRKGPLVVVSGKTTVSQALRNIPGVEVANVSRLNLLKLAPGGHLGRFIIWTKSAFEQLDSTFGTFAKSSAQKKGYTLPRPMIANADIVRLVNSDEIQAAVRASKVVVKRPTAPVRRSNPLKNLRAMIKLNPAAVSTRRTQVKSLKSKGIKVSKKNQLRAKLVAATFNQ.

Residue Thr-2 is modified to N-acetylthreonine.

The protein belongs to the universal ribosomal protein uL4 family.

The chain is Large ribosomal subunit protein uL4 (rpl4) from Dictyostelium discoideum (Social amoeba).